A 542-amino-acid polypeptide reads, in one-letter code: MSIFVENQLLALVAIMGIGLLLGRIRFFGFRLGVAAVLFVGLAFSTIEPDITVPPLIYVVGLALFVYTIGLEAGRDFFRSLRSTGLRNNGLALGAIIATTAIAWVVIKALGLAPATGAGMLTGALTNTPAMAAVVDALPALIDDNPTDAARILELPVVAYSLTYPLGVLVVILTIAVCGGLFKVNHEKEAKNAGVAVQELTGRRVRVTRDDLPAISNIPELLDLEVIVSRVERRGQHDQFIPEEGDRTRLGDILTVVGSDDELERAVGLLGEFVDGHPYSDIDLDYRRIFVSDESMVGVPLAKLRNRIPGMLITRIRRGDTDLIAHPDMTLQLGDLVRVVAPAERIKEATHIFGDSYKRLADFNLVPLVVGLSLGVLVGMMEFPLPGGSALSLGNAGGPLLIALLLGAMGRTGKVVWQIPYSANLALRQLGITMFLAAIGTTAGAGFRSALSDPASLLIIGVGALLTLVISVLVLVIGHKVMRIPFGETAGILAGTQTHPAVLSYISEASRNELPAMGYTSVYPLAMVAKIIAAQVLLFLLI.

The next 5 membrane-spanning stretches (helical) occupy residues 4 to 23, 28 to 47, 51 to 70, 91 to 113, and 160 to 182; these read FVEN…LLLG, FGFR…FSTI, ITVP…YTIG, LALG…LGLA, and YSLT…GGLF. 2 consecutive RCK C-terminal domains span residues 190–272 and 274–355; these read AKNA…LLGE and VDGH…IFGD. The next 5 membrane-spanning stretches (helical) occupy residues 363–385, 390–412, 425–447, 457–479, and 519–541; these read FNLV…EFPL, ALSL…MGRT, LALR…GAGF, LLII…VIGH, and YTSV…LFLL.

Belongs to the AAE transporter (TC 2.A.81) family.

Its subcellular location is the cell membrane. This is an uncharacterized protein from Corynebacterium efficiens (strain DSM 44549 / YS-314 / AJ 12310 / JCM 11189 / NBRC 100395).